The sequence spans 230 residues: UPF0758 protein ABC2615 (230 aa).

One can recognise an MPN domain in the interval 104–226 (VISSPEDAAE…FISLKERGFF (123 aa)). Zn(2+)-binding residues include His-175, His-177, and Asp-188. The short motif at 175–188 (HNHPSGDPSPSPED) is the JAMM motif element.

Belongs to the UPF0758 family.

In Shouchella clausii (strain KSM-K16) (Alkalihalobacillus clausii), this protein is UPF0758 protein ABC2615.